The chain runs to 314 residues: Phospho-N-acetylmuramoyl-pentapeptide-transferase (314 aa).

10 helical membrane passes run 4-24 (LIFY…PIFI), 52-72 (TMGG…TYFI), 77-97 (LFLI…LDDY), 111-131 (IQKL…ISIF), 146-166 (LDLK…MSNA), 169-189 (LTDG…LFTA), 191-211 (IAGI…AYLF), 219-239 (IFMG…LALY), 242-262 (VELF…SVII), and 294-314 (IVLI…GGVL).

It belongs to the glycosyltransferase 4 family. MraY subfamily. It depends on Mg(2+) as a cofactor.

It localises to the cell inner membrane. It carries out the reaction UDP-N-acetyl-alpha-D-muramoyl-L-alanyl-gamma-D-glutamyl-meso-2,6-diaminopimeloyl-D-alanyl-D-alanine + di-trans,octa-cis-undecaprenyl phosphate = di-trans,octa-cis-undecaprenyl diphospho-N-acetyl-alpha-D-muramoyl-L-alanyl-D-glutamyl-meso-2,6-diaminopimeloyl-D-alanyl-D-alanine + UMP. It functions in the pathway cell wall biogenesis; peptidoglycan biosynthesis. Catalyzes the initial step of the lipid cycle reactions in the biosynthesis of the cell wall peptidoglycan: transfers peptidoglycan precursor phospho-MurNAc-pentapeptide from UDP-MurNAc-pentapeptide onto the lipid carrier undecaprenyl phosphate, yielding undecaprenyl-pyrophosphoryl-MurNAc-pentapeptide, known as lipid I. The sequence is that of Phospho-N-acetylmuramoyl-pentapeptide-transferase from Petrotoga mobilis (strain DSM 10674 / SJ95).